Here is a 269-residue protein sequence, read N- to C-terminus: MAPLRILISNDDGVFADGIRTLAAAAAARGHQVTVVCPDQERSATGHGLTLQTPIRAERADELFAPGVTAWACSGTPADCMKLALFELVKEKPNLVLSGINHGPNLGTDVFCSGTVAAAMEGTLEGIRSLAVSSACFQWRQFQAAADLALEVSEQAIADQWPDNLLLNLNIPPCAREEMGALRWTRLSIRRYDEQFSRREDPRGRAYYWLAGEAVQDLESAGEGPRDWPSDVAQIHANSPSLTPIQPDLFWRGPLSGLPQLKLKDQLVR.

A divalent metal cation-binding residues include aspartate 11, aspartate 12, serine 43, and asparagine 101.

This sequence belongs to the SurE nucleotidase family. Requires a divalent metal cation as cofactor.

The protein localises to the cytoplasm. The catalysed reaction is a ribonucleoside 5'-phosphate + H2O = a ribonucleoside + phosphate. Functionally, nucleotidase that shows phosphatase activity on nucleoside 5'-monophosphates. In Synechococcus sp. (strain CC9605), this protein is 5'-nucleotidase SurE.